A 494-amino-acid polypeptide reads, in one-letter code: Cardiolipin synthase (494 aa).

Transmembrane regions (helical) follow at residues 14 to 34 (IILN…AFTI) and 45 to 65 (IWAW…LYLL). 2 PLD phosphodiesterase domains span residues 229–256 (MNNR…GDEY) and 407–434 (DNGF…DHRS). Catalysis depends on residues His234, Lys236, Asp241, His412, Lys414, and Asp419.

This sequence belongs to the phospholipase D family. Cardiolipin synthase subfamily.

It localises to the cell membrane. The catalysed reaction is 2 a 1,2-diacyl-sn-glycero-3-phospho-(1'-sn-glycerol) = a cardiolipin + glycerol. In terms of biological role, catalyzes the reversible phosphatidyl group transfer from one phosphatidylglycerol molecule to another to form cardiolipin (CL) (diphosphatidylglycerol) and glycerol. This is Cardiolipin synthase (cls) from Staphylococcus aureus (strain Mu50 / ATCC 700699).